The primary structure comprises 123 residues: MADVAKLCDELLALTILEAKELNDLLEEKGIKAAAAVAVAGPAGGGDAPAAEEKDEFDVVLTGAGDKKINVIKEVRAITGLGLKEAKDLVEGAPKAVKEAASKTEAEEIKAKLEAAGASVELK.

The protein belongs to the bacterial ribosomal protein bL12 family. In terms of assembly, homodimer. Part of the ribosomal stalk of the 50S ribosomal subunit. Forms a multimeric L10(L12)X complex, where L10 forms an elongated spine to which 2 to 4 L12 dimers bind in a sequential fashion. Binds GTP-bound translation factors.

Its function is as follows. Forms part of the ribosomal stalk which helps the ribosome interact with GTP-bound translation factors. Is thus essential for accurate translation. The sequence is that of Large ribosomal subunit protein bL12 from Maricaulis maris (strain MCS10) (Caulobacter maris).